The chain runs to 840 residues: Cancer-associated gene 1 protein homolog (840 aa).

Positions Met303–Tyr559 form a coiled coil. Positions Glu800–Asp840 are disordered. Over residues Pro806–Ser815 the composition is skewed to basic residues.

The polypeptide is Cancer-associated gene 1 protein homolog (CAGE1) (Macaca fascicularis (Crab-eating macaque)).